The chain runs to 147 residues: Sentan (147 aa).

The segment at 1 to 36 (MGGCMHSTWDHALHSRGEPRPSEAPASISAPSKMPK) is disordered. The span at 8–21 (TWDHALHSRGEPRP) shows a compositional bias: basic and acidic residues. A compositionally biased stretch (low complexity) spans 23–32 (EAPASISAPS).

This sequence belongs to the S-100 family. Expressed exclusively in ciliated epithelial cells. Detected in ciliated epithelium of trachea and oviduct (at protein level).

It is found in the cell projection. It localises to the cilium. May be a component of the linker structure that bridges the ciliary membrane and peripheral singlet microtubules. This is Sentan (Sntn) from Mus musculus (Mouse).